The following is a 554-amino-acid chain: Phosphomethylpyrimidine synthase (554 aa).

Substrate is bound by residues N188, M217, Y246, H282, 302-304, 343-346, and E382; these read SRG and DGLR. H386 is a binding site for Zn(2+). Y409 contributes to the substrate binding site. Position 450 (H450) interacts with Zn(2+). [4Fe-4S] cluster-binding residues include C530, C533, and C538.

The protein belongs to the ThiC family. As to quaternary structure, homodimer. [4Fe-4S] cluster serves as cofactor.

The catalysed reaction is 5-amino-1-(5-phospho-beta-D-ribosyl)imidazole + S-adenosyl-L-methionine = 4-amino-2-methyl-5-(phosphooxymethyl)pyrimidine + CO + 5'-deoxyadenosine + formate + L-methionine + 3 H(+). It participates in cofactor biosynthesis; thiamine diphosphate biosynthesis. Its function is as follows. Catalyzes the synthesis of the hydroxymethylpyrimidine phosphate (HMP-P) moiety of thiamine from aminoimidazole ribotide (AIR) in a radical S-adenosyl-L-methionine (SAM)-dependent reaction. The protein is Phosphomethylpyrimidine synthase of Coxiella burnetii (strain CbuK_Q154) (Coxiella burnetii (strain Q154)).